A 280-amino-acid polypeptide reads, in one-letter code: F420-dependent methylenetetrahydromethanopterin dehydrogenase (280 aa).

Belongs to the MTD family.

It catalyses the reaction 5,10-methylenetetrahydromethanopterin + oxidized coenzyme F420-(gamma-L-Glu)(n) + 2 H(+) = 5,10-methenyl-5,6,7,8-tetrahydromethanopterin + reduced coenzyme F420-(gamma-L-Glu)(n). Its pathway is one-carbon metabolism; methanogenesis from CO(2); 5,10-methylene-5,6,7,8-tetrahydromethanopterin from 5,10-methenyl-5,6,7,8-tetrahydromethanopterin (coenzyme F420 route): step 1/1. In terms of biological role, catalyzes the reversible reduction of methenyl-H(4)MPT(+) to methylene-H(4)MPT. In Methanospirillum hungatei JF-1 (strain ATCC 27890 / DSM 864 / NBRC 100397 / JF-1), this protein is F420-dependent methylenetetrahydromethanopterin dehydrogenase.